The sequence spans 663 residues: (R)-specific secondary-alkylsulfatase (663 aa).

Residues 1–28 (MSRFIRASQRRTLLATLIAATLAQPLLA) form the signal peptide. The Zn(2+) site is built by His-179, His-181, Asp-183, and His-184. Gln-232 is a sulfate binding site. Zn(2+)-binding residues include Glu-291 and Asp-310. Sulfate is bound by residues 318-323 (NLLTPR) and Arg-328. His-355 contributes to the Zn(2+) binding site. Tyr-417 serves as a coordination point for sulfate.

This sequence belongs to the metallo-beta-lactamase superfamily. Type III sulfatase family. In terms of assembly, homodimer.

It catalyses the reaction an (R)-secondary-alkyl sulfate + H2O = an (S)-secondary-alcohol + sulfate.. Alkylsulfatase that catalyzes the enantioselective hydrolysis of secondary-alkylsulfates with strict inversion of configuration, leading to the formation of homochiral (S)-configurated alcohols and nonreacted sulfate esters. The substrate spectrum includes a range of linear, branched or cyclic sec-alkylsulfates. Can use sec-alkylsulfate esters bearing aromatic, olefinic and acetylenic moieties. Acts by cleaving the C-O bond, resulting in inversion at the carbon. The sequence is that of (R)-specific secondary-alkylsulfatase from Pseudomonas sp.